We begin with the raw amino-acid sequence, 280 residues long: Elongation factor Ts (280 aa).

Positions 79–82 (TDFV) are involved in Mg(2+) ion dislocation from EF-Tu.

The protein belongs to the EF-Ts family.

The protein localises to the cytoplasm. Its function is as follows. Associates with the EF-Tu.GDP complex and induces the exchange of GDP to GTP. It remains bound to the aminoacyl-tRNA.EF-Tu.GTP complex up to the GTP hydrolysis stage on the ribosome. The protein is Elongation factor Ts of Treponema denticola (strain ATCC 35405 / DSM 14222 / CIP 103919 / JCM 8153 / KCTC 15104).